We begin with the raw amino-acid sequence, 284 residues long: D-tagatose-1,6-bisphosphate aldolase subunit GatY (284 aa).

Residue Asp82 is the Proton donor of the active site. Residues His83 and His180 each contribute to the Zn(2+) site. Gly181 lines the dihydroxyacetone phosphate pocket. His208 contributes to the Zn(2+) binding site. Residues 209 to 211 (GAS) and 230 to 233 (NVAT) contribute to the dihydroxyacetone phosphate site.

This sequence belongs to the class II fructose-bisphosphate aldolase family. TagBP aldolase GatY subfamily. In terms of assembly, forms a complex with GatZ. Requires Zn(2+) as cofactor.

The enzyme catalyses D-tagatofuranose 1,6-bisphosphate = D-glyceraldehyde 3-phosphate + dihydroxyacetone phosphate. The protein operates within carbohydrate metabolism; D-tagatose 6-phosphate degradation; D-glyceraldehyde 3-phosphate and glycerone phosphate from D-tagatose 6-phosphate: step 2/2. Functionally, catalytic subunit of the tagatose-1,6-bisphosphate aldolase GatYZ, which catalyzes the reversible aldol condensation of dihydroxyacetone phosphate (DHAP or glycerone-phosphate) with glyceraldehyde 3-phosphate (G3P) to produce tagatose 1,6-bisphosphate (TBP). Requires GatZ subunit for full activity and stability. Is involved in the catabolism of galactitol. In Escherichia coli O6:H1 (strain CFT073 / ATCC 700928 / UPEC), this protein is D-tagatose-1,6-bisphosphate aldolase subunit GatY.